We begin with the raw amino-acid sequence, 261 residues long: RING-H2 finger protein ATL58 (261 aa).

A helical transmembrane segment spans residues 25–45 (AFIFSVPICFTFIILFLFYLI). Residues 100–142 (CSVCLGDYQPNDKLQQIPVCKHTFHMDCIDLWLTSHTTCPLCR) form an RING-type; atypical zinc finger. Disordered stretches follow at residues 149–227 (RSRQ…NDGH) and 241–261 (MEEDERNNIGTSSACCSCRTG). Residues 194 to 221 (SGVSSQPESQPVVNHRGVSSQPESQPVN) are compositionally biased toward polar residues.

The protein belongs to the RING-type zinc finger family. ATL subfamily.

The protein resides in the membrane. It carries out the reaction S-ubiquitinyl-[E2 ubiquitin-conjugating enzyme]-L-cysteine + [acceptor protein]-L-lysine = [E2 ubiquitin-conjugating enzyme]-L-cysteine + N(6)-ubiquitinyl-[acceptor protein]-L-lysine.. It participates in protein modification; protein ubiquitination. The chain is RING-H2 finger protein ATL58 (ATL58) from Arabidopsis thaliana (Mouse-ear cress).